The chain runs to 257 residues: Nickel import system ATP-binding protein NikD (257 aa).

Residues 4–245 (IDIQNLTIKN…HLHPYTEQLI (242 aa)) form the ABC transporter domain. 37 to 44 (GESGAGKS) contacts ATP.

It belongs to the ABC transporter superfamily. As to quaternary structure, the complex is composed of two ATP-binding proteins (NikD and NikE), two transmembrane proteins (NikB and NikC) and a solute-binding protein (NikA).

The protein localises to the cell membrane. The catalysed reaction is Ni(2+)(out) + ATP + H2O = Ni(2+)(in) + ADP + phosphate + H(+). In terms of biological role, part of the ABC transporter complex NikABCDE (Opp2) involved in nickel import. Probably responsible for energy coupling to the transport system. The polypeptide is Nickel import system ATP-binding protein NikD (Staphylococcus aureus (strain bovine RF122 / ET3-1)).